We begin with the raw amino-acid sequence, 284 residues long: ATP phosphoribosyltransferase (284 aa).

Belongs to the ATP phosphoribosyltransferase family. Long subfamily. In terms of assembly, equilibrium between an active dimeric form, an inactive hexameric form and higher aggregates. Interconversion between the various forms is largely reversible and is influenced by the natural substrates and inhibitors of the enzyme. The cofactor is Mg(2+).

Its subcellular location is the cytoplasm. It carries out the reaction 1-(5-phospho-beta-D-ribosyl)-ATP + diphosphate = 5-phospho-alpha-D-ribose 1-diphosphate + ATP. Its pathway is amino-acid biosynthesis; L-histidine biosynthesis; L-histidine from 5-phospho-alpha-D-ribose 1-diphosphate: step 1/9. Feedback inhibited by histidine. In terms of biological role, catalyzes the condensation of ATP and 5-phosphoribose 1-diphosphate to form N'-(5'-phosphoribosyl)-ATP (PR-ATP). Has a crucial role in the pathway because the rate of histidine biosynthesis seems to be controlled primarily by regulation of HisG enzymatic activity. The protein is ATP phosphoribosyltransferase (hisG) of Mycobacterium bovis (strain ATCC BAA-935 / AF2122/97).